A 461-amino-acid polypeptide reads, in one-letter code: Photosystem II CP43 reaction center protein (461 aa).

The propeptide occupies 1 to 2; that stretch reads ME. The residue at position 3 (threonine 3) is an N-acetylthreonine. A Phosphothreonine modification is found at threonine 3. The next 5 membrane-spanning stretches (helical) occupy residues 57-81, 122-143, 166-188, 243-263, and 279-300; these read LFEVSHFVPEKPMYEQGLILLPHIA, LIGPETLEESFPFFGYIWKDKN, KAMYFGGIYDTWAPGGGDVRIIT, TPWPWARRAFVWSGEAYLSYS, and WFNNTAYPSEFYGPTGPEASQA. Glutamate 355 serves as a coordination point for [CaMn4O5] cluster. A helical membrane pass occupies residues 435–459; it reads RARAAAAGFEKGIDRVDEPVLSMRP.

The protein belongs to the PsbB/PsbC family. PsbC subfamily. As to quaternary structure, PSII is composed of 1 copy each of membrane proteins PsbA, PsbB, PsbC, PsbD, PsbE, PsbF, PsbH, PsbI, PsbJ, PsbK, PsbL, PsbM, PsbT, PsbX, PsbY, PsbZ, Psb30/Ycf12, at least 3 peripheral proteins of the oxygen-evolving complex and a large number of cofactors. It forms dimeric complexes. Binds multiple chlorophylls and provides some of the ligands for the Ca-4Mn-5O cluster of the oxygen-evolving complex. It may also provide a ligand for a Cl- that is required for oxygen evolution. PSII binds additional chlorophylls, carotenoids and specific lipids. is required as a cofactor.

It localises to the plastid. The protein resides in the chloroplast thylakoid membrane. One of the components of the core complex of photosystem II (PSII). It binds chlorophyll and helps catalyze the primary light-induced photochemical processes of PSII. PSII is a light-driven water:plastoquinone oxidoreductase, using light energy to abstract electrons from H(2)O, generating O(2) and a proton gradient subsequently used for ATP formation. The chain is Photosystem II CP43 reaction center protein from Chlamydomonas moewusii (Chlamydomonas eugametos).